Reading from the N-terminus, the 349-residue chain is Ferredoxin--NADP reductase 3 (349 aa).

7 residues coordinate FAD: E34, K42, Y46, V86, I120, D287, and S328.

It belongs to the ferredoxin--NADP reductase type 2 family. Homodimer. Requires FAD as cofactor.

The catalysed reaction is 2 reduced [2Fe-2S]-[ferredoxin] + NADP(+) + H(+) = 2 oxidized [2Fe-2S]-[ferredoxin] + NADPH. The polypeptide is Ferredoxin--NADP reductase 3 (Lysinibacillus sphaericus (strain C3-41)).